The primary structure comprises 629 residues: Methyl-accepting chemotaxis protein PscA (629 aa).

Residues 1–9 lie on the Cytoplasmic side of the membrane; sequence MKNLGFSKK. A helical membrane pass occupies residues 10–30; sequence ILLAAALIVVVAFSVFIVIND. The Periplasmic portion of the chain corresponds to 31–276; that stretch reads YRQRQSLKSS…AYAMLTEFRT (246 aa). The Cache domain maps to 36 to 258; that stretch reads SLKSSVKSEL…QGVATANWYV (223 aa). A helical membrane pass occupies residues 277–297; that stretch reads SAITAMVVVVMVIILLLGPLI. The region spanning 298-352 is the HAMP domain; it reads RVLMQPLHQMGRAMRDIADGEGDLTKRLAITSHDEFGALAESFNHFVERIHTSIR. Over 298 to 629 the chain is Cytoplasmic; it reads RVLMQPLHQM…LQQLVGSFRI (332 aa). One can recognise a Methyl-accepting transducer domain in the interval 357–593; sequence TAAQLGEVAT…SINVDITHIN (237 aa).

This sequence belongs to the methyl-accepting chemotaxis (MCP) protein family.

It localises to the cell inner membrane. Functionally, chemotactic-signal transducers respond to changes in the concentration of attractants and repellents in the environment, transduce a signal from the outside to the inside of the cell, and facilitate sensory adaptation through the variation of the level of methylation. PscA recognizes specifically and with high affinity L-Asp, D-Asp and L-Glu. It exerts a double function, in mediating chemotaxis to these amino acids and in modulating cyclic di-GMP (c-di-GMP) levels, causing alterations in biofilm development. Plays a key role in the infection process. It may facilitate bacterial entry into the plant. This chain is Methyl-accepting chemotaxis protein PscA, found in Pseudomonas syringae pv. tomato (strain ATCC BAA-871 / DC3000).